We begin with the raw amino-acid sequence, 126 residues long: Large ribosomal subunit protein bL12 (126 aa).

Belongs to the bacterial ribosomal protein bL12 family. Homodimer. Part of the ribosomal stalk of the 50S ribosomal subunit. Forms a multimeric L10(L12)X complex, where L10 forms an elongated spine to which 2 to 4 L12 dimers bind in a sequential fashion. Binds GTP-bound translation factors.

In terms of biological role, forms part of the ribosomal stalk which helps the ribosome interact with GTP-bound translation factors. Is thus essential for accurate translation. This Koribacter versatilis (strain Ellin345) protein is Large ribosomal subunit protein bL12.